A 241-amino-acid polypeptide reads, in one-letter code: MIINAKGPASFAEKYIVRSIWENKFPPGSILPAERELSELIGVTRTTLREVLQRLARDGWLKIQHGKPTRVNNFWETSGLNILETIADLNPEGFPVLVDQLLSARTNVSAIYFRGALRNSPDTAVEVLAQIHQLEDTAESFAEYDYLLHHTLAFSSGNPLYVLILNGFKGLYSRVGRYYFSSPEARQLALNFYKELEVLAKAKNYVDVPALMRTYGINSGKMWLQLRDDMPTSIALQEANS.

Residues 6–74 (KGPASFAEKY…HGKPTRVNNF (69 aa)) enclose the HTH gntR-type domain. The H-T-H motif DNA-binding region spans 34–53 (ERELSELIGVTRTTLREVLQ).

Homodimer.

Its subcellular location is the cytoplasm. Its function is as follows. Multifunctional regulator of fatty acid metabolism. This Shewanella sp. (strain MR-4) protein is Fatty acid metabolism regulator protein.